Reading from the N-terminus, the 609-residue chain is Protein FRIGIDA (609 aa).

Low complexity predominate over residues 1–18 (MSNYPPTVAAQPTTTANP). Residues 1 to 31 (MSNYPPTVAAQPTTTANPLLQRHQSEQRRRE) form a disordered region. Coiled-coil stretches lie at residues 60–97 (DELAAFSVAVETFKRQFDDLQKHIESIENAIDSKLESN) and 409–440 (QIKEQIVSLEKDTLQLDKEMEEKARSLSLMEE). Disordered stretches follow at residues 454 to 488 (RPRLSPMEMPPVTSSSYSPIYRDRSFPSQRDDDQD) and 587 to 609 (SEERYLGLSNQRSPRSNSSLDPK). Basic and acidic residues predominate over residues 474–484 (YRDRSFPSQRD). The span at 594–609 (LSNQRSPRSNSSLDPK) shows a compositional bias: polar residues.

Belongs to the Frigida family. In terms of assembly, homodimer. Component of the transcription activator complex FRI-C composed of FRI, FRL1, SUF4, FLX and FES1. Interacts (via N-terminus) with FRL1 and (via C-terminus) with FLX (via N-terminus), SUF4 (via C-terminus) and FES1 (via C-terminus). Interacts with ASHH2 and RIN1, a component of the SWR1 chromatin-remodeling complex. Interacts with CBP20, FIP1 and FIP2. As to expression, expressed in ovules, but not in stamens.

It is found in the nucleus speckle. Functionally, required for the regulation of flowering time in the late-flowering phenotype. Involved in the enrichment of a WDR5A-containing COMPASS-like complex at the 'FLOWERING LOCUS C' that trimethylates histone H3 'Lys-4', leading to FLC up-regulation and RNA levels increase. Variants with an early-flowering phenotype (Including cv. Columbia, cv. Landsberg Erecta and cv. Wassilewskija) show loss-of-function mutations of FRI. Able to delay flowering independently of FRL1 activity. Dispensable for the reactivation of FLC in early embryogenesis, but required to maintain high levels of FLC expression in later embryonic and vegetative development. Suppresses the repression of FLC by the autonomous pathway, but has no effect on the expression of the genes involved in this pathway. The polypeptide is Protein FRIGIDA (Arabidopsis thaliana (Mouse-ear cress)).